The sequence spans 345 residues: Putative membrane protein ORF59 (345 aa).

A run of 4 helical transmembrane segments spans residues 46-63 (LVFA…MMLI), 101-118 (IVFV…LVFL), 147-165 (IFGI…FSIL), and 265-286 (VVPV…WMVI).

It localises to the membrane. The sequence is that of Putative membrane protein ORF59 (ORF59) from Ictalurid herpesvirus 1 (strain Auburn) (IcHV-1).